A 732-amino-acid polypeptide reads, in one-letter code: E3 ubiquitin-protein ligase TRIM56 (732 aa).

The RING-type zinc finger occupies 21 to 60; that stretch reads CKICLEQLRVPKTLPCLHTYCQDCLAQLAEGSRLRCPECR. The segment at 164-205 adopts a B box-type zinc-finger fold; the sequence is RQAAQCPQHPGEALRFLCQPCSQLLCRECRLDPHLDHPCLPL. Zn(2+) is bound by residues C169, H172, C192, and H197. The stretch at 211–286 forms a coiled coil; that stretch reads ARRPGLEELL…LRAHVEAAEE (76 aa). Residues 374 to 384 are compositionally biased toward basic and acidic residues; sequence LPQKDSGKDGA. The tract at residues 374–462 is disordered; sequence LPQKDSGKDG…PAPGPNLEGS (89 aa). Over residues 389–405 the composition is skewed to polar residues; sequence GDATQPQSRDGVQTPNQ. T402 carries the phosphothreonine modification. Positions 407-416 are enriched in basic and acidic residues; sequence DGAKTPKESR. Residue T419 is modified to Phosphothreonine. Over residues 434–446 the composition is skewed to basic residues; sequence SNKKRKFKGRLKS. Phosphoserine is present on S452.

The protein belongs to the TRIM/RBCC family. As to quaternary structure, interacts with STING1. Interacts with TICAM1.

It is found in the cytoplasm. It carries out the reaction S-ubiquitinyl-[E2 ubiquitin-conjugating enzyme]-L-cysteine + [acceptor protein]-L-lysine = [E2 ubiquitin-conjugating enzyme]-L-cysteine + N(6)-ubiquitinyl-[acceptor protein]-L-lysine.. It functions in the pathway protein modification; protein ubiquitination. Its function is as follows. E3 ubiquitin-protein ligase that plays a key role in innate antiviral immunity by mediating ubiquitination of CGAS and STING1. In response to pathogen- and host-derived double-stranded DNA (dsDNA), targets STING1 to 'Lys-63'-linked ubiquitination, thereby promoting its homodimerization, a step required for the production of type I interferon IFN-beta. Also mediate monoubiquitination of CGAS, thereby promoting CGAS oligomerization and subsequent activation. Independently of its E3 ubiquitin ligase activity, positive regulator of TLR3 signaling. Potentiates extracellular double stranded RNA (dsRNA)-induced expression of IFNB1 and interferon-stimulated genes ISG15, IFIT1/ISG56, CXCL10, OASL and CCL5/RANTES. Restricts bovine viral diarrhea virus (BVDV) replication. The chain is E3 ubiquitin-protein ligase TRIM56 from Bos taurus (Bovine).